Here is a 448-residue protein sequence, read N- to C-terminus: Exoglucanase GH7B (448 aa).

Residues methionine 1–glycine 17 form the signal peptide. Residue glutamine 18 is modified to Pyrrolidone carboxylic acid. 2 disulfide bridges follow: cysteine 62/cysteine 83 and cysteine 73/cysteine 79. Residues tyrosine 97, aspartate 119–isoleucine 120, and lysine 197 contribute to the substrate site. 6 cysteine pairs are disulfide-bonded: cysteine 154/cysteine 415, cysteine 188/cysteine 226, cysteine 192/cysteine 225, cysteine 246/cysteine 271, cysteine 254/cysteine 259, and cysteine 276/cysteine 350. Glutamate 228 (nucleophile) is an active-site residue. Substrate is bound by residues aspartate 230–glutamate 233 and histidine 244. Residue glutamate 233 is the Proton donor/acceptor of the active site. Substrate-binding residues include arginine 266 and aspartate 274. Substrate is bound by residues tryptophan 396 and arginine 412.

This sequence belongs to the glycosyl hydrolase 7 (cellulase C) family. Monomer. In terms of tissue distribution, highly expressed in the hepatopancreas (at protein level). Little or no expression detected in the hindgut or the rest of the body (at protein level).

It localises to the secreted. The catalysed reaction is Hydrolysis of (1-&gt;4)-beta-D-glucosidic linkages in cellulose and cellotetraose, releasing cellobiose from the non-reducing ends of the chains.. Its function is as follows. Exocellobiohydrolase (CBH) that catalyzes the hydrolysis of 1,4-beta-D-glucosidic bonds in cellulose to release the disaccharide cellobiose. The degradation of cellulose involves an interplay between different cellulolytic enzymes. Hydrolysis starts with endoglucanases (EGs), which cut internal beta-1,4-glucosidic bonds in cellulose to reduce the polymerization degree of the substrate and create new chain ends for exocellobiohydrolases (CBHs). The CBHs release the disaccharide cellobiose from the non-reducing end of the cellulose polymer chain. Finally, beta-1,4-glucosidases hydrolyze the cellobiose and other short cello-oligosaccharides into glucose units. The chain is Exoglucanase GH7B from Limnoria quadripunctata (Gribble).